The primary structure comprises 227 residues: PKHD-type hydroxylase Neut_0373 (227 aa).

The Fe2OG dioxygenase domain occupies Lys78 to Ser179. His97, Asp99, and His160 together coordinate Fe cation. Position 170 (Arg170) interacts with 2-oxoglutarate.

Requires Fe(2+) as cofactor. L-ascorbate is required as a cofactor.

This chain is PKHD-type hydroxylase Neut_0373, found in Nitrosomonas eutropha (strain DSM 101675 / C91 / Nm57).